Here is a 158-residue protein sequence, read N- to C-terminus: Large ribosomal subunit protein eL20z (158 aa).

The protein belongs to the eukaryotic ribosomal protein eL20 family.

The sequence is that of Large ribosomal subunit protein eL20z (RPL18A1) from Arabidopsis thaliana (Mouse-ear cress).